Consider the following 388-residue polypeptide: Succinate--CoA ligase [ADP-forming] subunit beta (388 aa).

The 236-residue stretch at 9–244 (KEILRKYNVP…LDEEDANEIE (236 aa)) folds into the ATP-grasp domain. ATP contacts are provided by residues lysine 46, 53 to 55 (GRG), glutamate 99, alanine 102, and glutamate 107. Residues asparagine 199 and aspartate 213 each coordinate Mg(2+). Residues asparagine 264 and 321–323 (GIM) each bind substrate.

The protein belongs to the succinate/malate CoA ligase beta subunit family. As to quaternary structure, heterotetramer of two alpha and two beta subunits. The cofactor is Mg(2+).

The catalysed reaction is succinate + ATP + CoA = succinyl-CoA + ADP + phosphate. It carries out the reaction GTP + succinate + CoA = succinyl-CoA + GDP + phosphate. It participates in carbohydrate metabolism; tricarboxylic acid cycle; succinate from succinyl-CoA (ligase route): step 1/1. Functionally, succinyl-CoA synthetase functions in the citric acid cycle (TCA), coupling the hydrolysis of succinyl-CoA to the synthesis of either ATP or GTP and thus represents the only step of substrate-level phosphorylation in the TCA. The beta subunit provides nucleotide specificity of the enzyme and binds the substrate succinate, while the binding sites for coenzyme A and phosphate are found in the alpha subunit. The sequence is that of Succinate--CoA ligase [ADP-forming] subunit beta from Cupriavidus taiwanensis (strain DSM 17343 / BCRC 17206 / CCUG 44338 / CIP 107171 / LMG 19424 / R1) (Ralstonia taiwanensis (strain LMG 19424)).